The primary structure comprises 843 residues: Protein P (843 aa).

A terminal protein domain (TP) region spans residues 1–177; sequence MPLSYQHFRK…FCGSPYSWEQ (177 aa). A spacer region spans residues 178-346; the sequence is ELQHGRLFFK…YCLSHIVNLL (169 aa). The interval 248–272 is disordered; sequence HPTTRQSFGVEPSGSGHIDNSASNS. Residues 347-690 are polymerase/reverse transcriptase domain (RT); sequence EDWGPCTENG…YLNLYPVARQ (344 aa). A Reverse transcriptase domain is found at 357–600; sequence EHNIRIPRTP…YSLNFMGYVI (244 aa). Positions 429, 551, and 552 each coordinate Mg(2+).

It belongs to the hepadnaviridae P protein family.

The enzyme catalyses DNA(n) + a 2'-deoxyribonucleoside 5'-triphosphate = DNA(n+1) + diphosphate. The catalysed reaction is Endonucleolytic cleavage to 5'-phosphomonoester.. Activated by host HSP70 and HSP40 in vitro to be able to bind the epsilon loop of the pgRNA. Because deletion of the RNase H region renders the protein partly chaperone-independent, the chaperones may be needed indirectly to relieve occlusion of the RNA-binding site by this domain. Inhibited by several reverse-transcriptase inhibitors: Lamivudine, Adefovir and Entecavir. Its function is as follows. Multifunctional enzyme that converts the viral RNA genome into dsDNA in viral cytoplasmic capsids. This enzyme displays a DNA polymerase activity that can copy either DNA or RNA templates, and a ribonuclease H (RNase H) activity that cleaves the RNA strand of RNA-DNA heteroduplexes in a partially processive 3'- to 5'-endonucleasic mode. Neo-synthesized pregenomic RNA (pgRNA) are encapsidated together with the P protein, and reverse-transcribed inside the nucleocapsid. Initiation of reverse-transcription occurs first by binding the epsilon loop on the pgRNA genome, and is initiated by protein priming, thereby the 5'-end of (-)DNA is covalently linked to P protein. Partial (+)DNA is synthesized from the (-)DNA template and generates the relaxed circular DNA (RC-DNA) genome. After budding and infection, the RC-DNA migrates in the nucleus, and is converted into a plasmid-like covalently closed circular DNA (cccDNA). The activity of P protein does not seem to be necessary for cccDNA generation, and is presumably released from (+)DNA by host nuclear DNA repair machinery. This is Protein P from Homo sapiens (Human).